The sequence spans 286 residues: MAGAKEIRSKIASIKSTQKITSAMEKVAVSKMRRAQLRMAASRPYAERIRQVIGHLANANPEYRHPFMIERPVKRAGYIVVSSDRGLCGGLNTNLFKALVKDMNENREQGVEIDLCVIGSKGATFFRIFGGNVVAAISHLGEEPSINDLIGSVKVMLDAYLDGRIDRLSVVSNKFINTMTQKPTVEQLVPLVATPDQDLKHHWDYLYEPDAKELLDGLMVRYVESQVYQAVVENNAAEQAARMIAMKNATDNAGDLIKELQLIYNKARQAAITQEISEIVGGAAAV.

This sequence belongs to the ATPase gamma chain family. In terms of assembly, F-type ATPases have 2 components, CF(1) - the catalytic core - and CF(0) - the membrane proton channel. CF(1) has five subunits: alpha(3), beta(3), gamma(1), delta(1), epsilon(1). CF(0) has three main subunits: a, b and c.

It localises to the cell inner membrane. Functionally, produces ATP from ADP in the presence of a proton gradient across the membrane. The gamma chain is believed to be important in regulating ATPase activity and the flow of protons through the CF(0) complex. The protein is ATP synthase gamma chain of Pseudomonas putida (strain GB-1).